Consider the following 125-residue polypeptide: Holo-[acyl-carrier-protein] synthase (125 aa).

Residues aspartate 8 and glutamate 57 each coordinate Mg(2+).

It belongs to the P-Pant transferase superfamily. AcpS family. The cofactor is Mg(2+).

It localises to the cytoplasm. It carries out the reaction apo-[ACP] + CoA = holo-[ACP] + adenosine 3',5'-bisphosphate + H(+). Transfers the 4'-phosphopantetheine moiety from coenzyme A to a Ser of acyl-carrier-protein. The sequence is that of Holo-[acyl-carrier-protein] synthase from Koribacter versatilis (strain Ellin345).